Consider the following 77-residue polypeptide: Apelin (77 aa).

Residues 1–22 (MNLRLCVQALLLLWLSLTAVCG) form the signal peptide. The propeptide occupies 23–41 (VPLMLPPDGTGLEEGSMRY). The segment at 46 to 77 (RTSRTGPGAWQGGRRKFRRQRPRLSHKGPMPF) is disordered. Residues 58–71 (GRRKFRRQRPRLSH) show a composition bias toward basic residues.

This sequence belongs to the apelin family. In terms of processing, several active peptides may be produced by proteolytic processing of the peptide precursor. As to expression, expressed in extraembryonic visceral endoderm and in the primitive streak at 6.5 and 7.5 dpc. Expressed in the anterior visceral yolk sac at 8.25 dpc. Expressed weakly in the embryonic heart at 11.5 dpc. Expressed in the adult heart. Expressed in endothelial cells and cardiomyocytes and weakly expressed in fibroblasts.

The protein localises to the secreted. It localises to the extracellular space. Its function is as follows. Peptide hormone that functions as endogenous ligand for the G-protein-coupled apelin receptor (APLNR/APJ). Functions as a balanced agonist activating both G(i) protein pathway and beta-arrestin pathway of APLNR. Downstream G proteins activation, apelin can inhibit cAMP production and activate key intracellular effectors such as ERKs. On the other hand, APLNR activation induces beta-arrestin recruitment to the membrane leading to desensitization and internalization of the receptor. Apelin also blunts mechanical stretch-induced hypertrophic induction from APLNR. Apelin-36 dissociates more hardly than (pyroglu)apelin-13 from APLNR. Involved in the regulation of cardiac precursor cell movements during gastrulation and heart morphogenesis. Has an inhibitory effect on cytokine production in response to T-cell receptor/CD3 cross-linking; the oral intake of apelin in the colostrum and the milk might therefore modulate immune responses in neonates. Plays a role in early coronary blood vessels formation. Mediates myocardial contractility in an ERK1/2-dependent manner. May also have a role in the central control of body fluid homeostasis by influencing vasopressin release and drinking behavior. This is Apelin from Mus musculus (Mouse).